Here is a 155-residue protein sequence, read N- to C-terminus: UBA-like domain-containing protein 1 (155 aa).

Residues 81–155 are disordered; the sequence is KASESFNSSS…KASAAMEAER (75 aa). The segment covering 83 to 96 has biased composition (low complexity); sequence SESFNSSSSPSMAT. A compositionally biased stretch (polar residues) spans 112 to 127; it reads ANQQSLWTQGPSAQQT. A compositionally biased stretch (low complexity) spans 139–155; sequence QQAASEQKASAAMEAER.

It belongs to the UBALD family.

This is UBA-like domain-containing protein 1 (ubald1) from Danio rerio (Zebrafish).